The chain runs to 122 residues: Co-chaperonin GroES (122 aa).

This sequence belongs to the GroES chaperonin family. As to quaternary structure, heptamer of 7 subunits arranged in a ring. Interacts with the chaperonin GroEL.

It localises to the cytoplasm. Together with the chaperonin GroEL, plays an essential role in assisting protein folding. The GroEL-GroES system forms a nano-cage that allows encapsulation of the non-native substrate proteins and provides a physical environment optimized to promote and accelerate protein folding. GroES binds to the apical surface of the GroEL ring, thereby capping the opening of the GroEL channel. This is Co-chaperonin GroES from Aquifex aeolicus (strain VF5).